A 966-amino-acid polypeptide reads, in one-letter code: Mitogen-activated protein kinase kinase kinase 13 (966 aa).

The interval 1–59 (MANPQEHLSCSSSPRLPLSENKTFNGLQDDLAPMGSHASPKLLKDQQEKGMVQTELAEG) is disordered. The span at 8–19 (LSCSSSPRLPLS) shows a compositional bias: low complexity. In terms of domain architecture, Protein kinase spans 168–409 (ISELQWLGSG…FRQTLMHLDI (242 aa)). Residues 174-182 (LGSGAQGAV) and lysine 195 each bind ATP. Aspartate 279 (proton acceptor) is an active-site residue. 2 leucine-zipper regions span residues 433–454 (VKKHFEKIKSEGTCIHRLDEEL) and 486–507 (LSAIMLQLEMREKELIKREQAV). The stretch at 457-496 (RRREELRHALDIREHYERKLERANNLYMELSAIMLQLEMR) forms a coiled coil. Disordered stretches follow at residues 561–663 (EVAP…GQDI), 743–874 (LDVP…DELA), and 937–966 (QFEESDCDSSDGECSDATVRTNKHYSSATW). Residues 567–581 (SPLSGSPKLSSSSSK) are compositionally biased toward low complexity. Basic residues predominate over residues 582–594 (SRYRSKPRHRRGN). Positions 609–622 (QPAQEDSPHPTSLH) are enriched in polar residues. Residues 629–642 (PSSQHHNLLQQQYQ) are compositionally biased toward low complexity. Acidic residues predominate over residues 814–827 (DSSEEEEGEVDSEV). Residues 815 to 828 (SSEEEEGEVDSEVE) form an acidic region. A compositionally biased stretch (polar residues) spans 840-855 (SSCQSYSTFSSENFSV). The segment covering 939–950 (EESDCDSSDGEC) has biased composition (acidic residues). The segment covering 954–966 (TVRTNKHYSSATW) has biased composition (polar residues).

It belongs to the protein kinase superfamily. Ser/Thr protein kinase family. In terms of assembly, homodimer; forms dimers through the leucine-zipper motif. Interacts with the C-terminus of MAPK8IP1 through the kinase catalytic domain. Binds PRDX3. Associates with the IKK complex through the kinase domain. It depends on Mg(2+) as a cofactor. In terms of processing, autophosphorylated on serine and threonine residues.

Its subcellular location is the cytoplasm. The protein resides in the membrane. It catalyses the reaction L-seryl-[protein] + ATP = O-phospho-L-seryl-[protein] + ADP + H(+). The catalysed reaction is L-threonyl-[protein] + ATP = O-phospho-L-threonyl-[protein] + ADP + H(+). With respect to regulation, activated by autophosphorylation and homodimerization. In terms of biological role, activates the JUN N-terminal pathway through activation of the MAP kinase kinase MAP2K7. Acts synergistically with PRDX3 to regulate the activation of NF-kappa-B in the cytosol. This activation is kinase-dependent and involves activating the IKK complex, the IKBKB-containing complex that phosphorylates inhibitors of NF-kappa-B. This chain is Mitogen-activated protein kinase kinase kinase 13 (MAP3K13), found in Bos taurus (Bovine).